The primary structure comprises 621 residues: 1,4-alpha-glucan branching enzyme GlgB (621 aa).

Catalysis depends on Asp302, which acts as the Nucleophile. The active-site Proton donor is the Glu355.

It belongs to the glycosyl hydrolase 13 family. GlgB subfamily. As to quaternary structure, monomer.

It carries out the reaction Transfers a segment of a (1-&gt;4)-alpha-D-glucan chain to a primary hydroxy group in a similar glucan chain.. Its pathway is glycan biosynthesis; glycogen biosynthesis. Functionally, catalyzes the formation of the alpha-1,6-glucosidic linkages in glycogen by scission of a 1,4-alpha-linked oligosaccharide from growing alpha-1,4-glucan chains and the subsequent attachment of the oligosaccharide to the alpha-1,6 position. This chain is 1,4-alpha-glucan branching enzyme GlgB, found in Dechloromonas aromatica (strain RCB).